The sequence spans 134 residues: MSVSNDLIWQVIRDNNRFLVKRPEFGGIQFNREPVNVSGKNAQRFSGLCNDKAVGVQANSPRGVVLITKTNPKNAQKPAKLFRKDVIANASSRKTYKSIAGRIGRTGYRDDLVKVSVARASAILSSQRPKKTVA.

S60 is modified (phosphoserine).

The protein belongs to the eukaryotic ribosomal protein eL28 family. Component of the large ribosomal subunit (LSU). Mature yeast ribosomes consist of a small (40S) and a large (60S) subunit. The 40S small subunit contains 1 molecule of ribosomal RNA (18S rRNA) and at least 33 different proteins. The large 60S subunit contains 3 rRNA molecules (25S, 5.8S and 5S rRNA) and at least 46 different proteins.

Its subcellular location is the cytoplasm. Functionally, component of the ribosome, a large ribonucleoprotein complex responsible for the synthesis of proteins in the cell. The small ribosomal subunit (SSU) binds messenger RNAs (mRNAs) and translates the encoded message by selecting cognate aminoacyl-transfer RNA (tRNA) molecules. The large subunit (LSU) contains the ribosomal catalytic site termed the peptidyl transferase center (PTC), which catalyzes the formation of peptide bonds, thereby polymerizing the amino acids delivered by tRNAs into a polypeptide chain. The nascent polypeptides leave the ribosome through a tunnel in the LSU and interact with protein factors that function in enzymatic processing, targeting, and the membrane insertion of nascent chains at the exit of the ribosomal tunnel. This chain is Large ribosomal subunit protein eL28 (rpl44), found in Schizosaccharomyces pombe (strain 972 / ATCC 24843) (Fission yeast).